Here is a 1252-residue protein sequence, read N- to C-terminus: DNA-directed RNA polymerase subunit beta (1252 aa).

It belongs to the RNA polymerase beta chain family. The RNAP catalytic core consists of 2 alpha, 1 beta, 1 beta' and 1 omega subunit. When a sigma factor is associated with the core the holoenzyme is formed, which can initiate transcription.

The enzyme catalyses RNA(n) + a ribonucleoside 5'-triphosphate = RNA(n+1) + diphosphate. Its function is as follows. DNA-dependent RNA polymerase catalyzes the transcription of DNA into RNA using the four ribonucleoside triphosphates as substrates. In Chlamydia caviae (strain ATCC VR-813 / DSM 19441 / 03DC25 / GPIC) (Chlamydophila caviae), this protein is DNA-directed RNA polymerase subunit beta.